The sequence spans 422 residues: MYTHVDVVGIAEASAALYVQKDRDRYSDVLTTIENFIYQHKCIITGESAHLLFLKKNIYLYEFYSNNVAEHSKALATLLYKLDPEYLTRYTVLITKIPNHWYVINVDQREFVRLYAIPAVKQHLPIPILPFYCTSALTQQELFCLGPELQLIQIYSKLCNPNFVEEWPTLLDYEKSMRTLFLEQFPQRLEMTGGKKEEEEKHESIIKKIILEMVSTRQRIVVGGYIQKNLYNHVLKNRNRLQLITSLNIYEEKDIIQQFCDSNGLKIKIRINNPLLPTNPELRRLTIYFNNTNDDDQSYLIVDMYNTGSYELVPTNQINTLDGSFLIGTPFVQARFLLVEIWVLMLIAQQTKKDTKKIIQFFINQYEMLMNSPWPSMEALFPSSSKRYLGNYVDPNALIKWAQLKLKRIPPFYPGKPDEESC.

Belongs to the asfivirus K421R family.

It localises to the virion. This is an uncharacterized protein from Ornithodoros (relapsing fever ticks).